Consider the following 222-residue polypeptide: Peptide methionine sulfoxide reductase MsrA (222 aa).

Cys54 is a catalytic residue.

Belongs to the MsrA Met sulfoxide reductase family.

It carries out the reaction L-methionyl-[protein] + [thioredoxin]-disulfide + H2O = L-methionyl-(S)-S-oxide-[protein] + [thioredoxin]-dithiol. The enzyme catalyses [thioredoxin]-disulfide + L-methionine + H2O = L-methionine (S)-S-oxide + [thioredoxin]-dithiol. Its function is as follows. Has an important function as a repair enzyme for proteins that have been inactivated by oxidation. Catalyzes the reversible oxidation-reduction of methionine sulfoxide in proteins to methionine. This chain is Peptide methionine sulfoxide reductase MsrA, found in Methylococcus capsulatus (strain ATCC 33009 / NCIMB 11132 / Bath).